We begin with the raw amino-acid sequence, 123 residues long: Small ribosomal subunit protein uS12 (123 aa).

Positions 9-28 (RNGRKRATKKTTTPALKGAP) are disordered. Low complexity predominate over residues 18–27 (KTTTPALKGA). Asp89 is modified (3-methylthioaspartic acid).

The protein belongs to the universal ribosomal protein uS12 family. Part of the 30S ribosomal subunit. Contacts proteins S8 and S17. May interact with IF1 in the 30S initiation complex.

Functionally, with S4 and S5 plays an important role in translational accuracy. In terms of biological role, interacts with and stabilizes bases of the 16S rRNA that are involved in tRNA selection in the A site and with the mRNA backbone. Located at the interface of the 30S and 50S subunits, it traverses the body of the 30S subunit contacting proteins on the other side and probably holding the rRNA structure together. The combined cluster of proteins S8, S12 and S17 appears to hold together the shoulder and platform of the 30S subunit. This is Small ribosomal subunit protein uS12 from Desulfosudis oleivorans (strain DSM 6200 / JCM 39069 / Hxd3) (Desulfococcus oleovorans).